The sequence spans 358 residues: Neuronal-specific septin-3 (358 aa).

Residues 1 to 10 (MSKGLPETRT) are compositionally biased toward basic and acidic residues. Residues 1-30 (MSKGLPETRTDAAMSELVPEPRPKPAVPMK) form a disordered region. In terms of domain architecture, Septin-type G spans 58–331 (TGFDFNIMVV…ETYRAKRLND (274 aa)). Residues 68–75 (GQSGLGKS) form a G1 motif region. 68-75 (GQSGLGKS) contacts GTP. Position 91 is a phosphoserine (serine 91). Residue threonine 102 coordinates GTP. Residues 125–128 (DTPG) are G3 motif. The tract at residues 207 to 210 (AKAD) is G4 motif. GTP-binding positions include 208–216 (KADTMTLEE), glycine 265, and arginine 280.

This sequence belongs to the TRAFAC class TrmE-Era-EngA-EngB-Septin-like GTPase superfamily. Septin GTPase family. In terms of assembly, septins polymerize into heterooligomeric protein complexes that form filaments, and can associate with cellular membranes, actin filaments and microtubules. GTPase activity is required for filament formation. Phosphorylated by PKG on serine residues. Phosphorylated by PKG on Ser-91. In terms of tissue distribution, brain-specific.

The protein localises to the cytoplasm. The protein resides in the cytoskeleton. It localises to the synapse. In terms of biological role, filament-forming cytoskeletal GTPase. May play a role in cytokinesis (Potential). This is Neuronal-specific septin-3 from Homo sapiens (Human).